The following is a 417-amino-acid chain: Serine hydroxymethyltransferase (417 aa).

(6S)-5,6,7,8-tetrahydrofolate is bound by residues Leu121 and 125–127 (GHL). An N6-(pyridoxal phosphate)lysine modification is found at Lys229. (6S)-5,6,7,8-tetrahydrofolate is bound at residue 355–357 (SPF).

Belongs to the SHMT family. In terms of assembly, homodimer. Requires pyridoxal 5'-phosphate as cofactor.

Its subcellular location is the cytoplasm. It carries out the reaction (6R)-5,10-methylene-5,6,7,8-tetrahydrofolate + glycine + H2O = (6S)-5,6,7,8-tetrahydrofolate + L-serine. It participates in one-carbon metabolism; tetrahydrofolate interconversion. The protein operates within amino-acid biosynthesis; glycine biosynthesis; glycine from L-serine: step 1/1. In terms of biological role, catalyzes the reversible interconversion of serine and glycine with tetrahydrofolate (THF) serving as the one-carbon carrier. This reaction serves as the major source of one-carbon groups required for the biosynthesis of purines, thymidylate, methionine, and other important biomolecules. Also exhibits THF-independent aldolase activity toward beta-hydroxyamino acids, producing glycine and aldehydes, via a retro-aldol mechanism. This is Serine hydroxymethyltransferase from Stenotrophomonas maltophilia (strain R551-3).